Consider the following 328-residue polypeptide: Malate dehydrogenase (328 aa).

13 to 19 (GGTGQIA) provides a ligand contact to NAD(+). Substrate is bound by residues Arg-94 and Arg-100. Residues Asn-107, Gln-114, and 131–133 (VGN) each bind NAD(+). Residues Asn-133 and Arg-164 each coordinate substrate. Catalysis depends on His-189, which acts as the Proton acceptor.

This sequence belongs to the LDH/MDH superfamily. MDH type 2 family.

It carries out the reaction (S)-malate + NAD(+) = oxaloacetate + NADH + H(+). Its function is as follows. Catalyzes the reversible oxidation of malate to oxaloacetate. This chain is Malate dehydrogenase, found in Chlamydia felis (strain Fe/C-56) (Chlamydophila felis).